We begin with the raw amino-acid sequence, 72 residues long: Large ribosomal subunit protein uL29 (72 aa).

This sequence belongs to the universal ribosomal protein uL29 family.

The chain is Large ribosomal subunit protein uL29 from Prochlorococcus marinus (strain MIT 9301).